A 392-amino-acid chain; its full sequence is N-acetylneuraminate epimerase (392 aa).

A signal peptide spans 1–35; sequence MTQIYHQYKKKLSTKVILLSALTLCITFSLPYANA. 7 Kelch repeats span residues 56–100, 102–155, 157–192, 193–238, 241–290, 312–361, and 363–392; these read HLYV…VALS, KLYV…TTLN, TQAL…AVVN, AYFD…TAKK, LILI…LAGA, QQFN…QDKD, and VILL…LHLE. The active-site Proton acceptor is the glutamate 247.

Belongs to the NanM family. In terms of assembly, homodimer.

The protein resides in the periplasm. The enzyme catalyses N-acetyl-alpha-neuraminate = N-acetyl-beta-neuraminate. Functionally, converts alpha-N-acetylneuranimic acid (Neu5Ac) to the beta-anomer, accelerating the equilibrium between the alpha- and beta-anomers. Probably facilitates sialidase-negative bacteria to compete successfully for limited amounts of extracellular Neu5Ac, which is likely taken up in the beta-anomer. In addition, the rapid removal of sialic acid from solution might be advantageous to the bacterium to damp down host responses. The protein is N-acetylneuraminate epimerase of Yersinia enterocolitica serotype O:8 / biotype 1B (strain NCTC 13174 / 8081).